The primary structure comprises 219 residues: Thymidylate kinase (219 aa).

7-14 lines the ATP pocket; sequence GIDGAGKS.

Belongs to the thymidylate kinase family.

It catalyses the reaction dTMP + ATP = dTDP + ADP. Phosphorylation of dTMP to form dTDP in both de novo and salvage pathways of dTTP synthesis. This is Thymidylate kinase from Chlorobium phaeobacteroides (strain DSM 266 / SMG 266 / 2430).